A 468-amino-acid chain; its full sequence is UDP-N-acetylmuramate--L-alanine ligase (468 aa).

112-118 (GTHGKTT) is a binding site for ATP.

The protein belongs to the MurCDEF family.

The protein resides in the cytoplasm. The catalysed reaction is UDP-N-acetyl-alpha-D-muramate + L-alanine + ATP = UDP-N-acetyl-alpha-D-muramoyl-L-alanine + ADP + phosphate + H(+). Its pathway is cell wall biogenesis; peptidoglycan biosynthesis. Functionally, cell wall formation. This chain is UDP-N-acetylmuramate--L-alanine ligase, found in Bordetella petrii (strain ATCC BAA-461 / DSM 12804 / CCUG 43448).